The sequence spans 560 residues: Putative ABC transporter ATP-binding protein SP_0483 (560 aa).

2 ABC transporter domains span residues 6 to 247 (IEWK…GIRE) and 297 to 528 (FRLE…ANLK). Residues 40–47 (GPSGSGKS) and 329–336 (GKNGAGKS) each bind ATP.

This sequence belongs to the ABC transporter superfamily.

Its subcellular location is the cell membrane. Probably part of an ABC transporter complex. Responsible for energy coupling to the transport system. This Streptococcus pneumoniae serotype 4 (strain ATCC BAA-334 / TIGR4) protein is Putative ABC transporter ATP-binding protein SP_0483.